Consider the following 240-residue polypeptide: Myogenic factor 6 (240 aa).

The bHLH domain maps to 91-142; that stretch reads DRRKAATLRERRRLKKINEAFEALKRRTVANPNQRLPKVEILRSAINYIERL.

In terms of assembly, efficient DNA binding requires dimerization with another bHLH protein. In terms of tissue distribution, skeletal muscle.

Its subcellular location is the nucleus. Functionally, involved in muscle differentiation (myogenic factor). Induces fibroblasts to differentiate into myoblasts. Probable sequence specific DNA-binding protein. The polypeptide is Myogenic factor 6 (myf6) (Xenopus laevis (African clawed frog)).